The chain runs to 332 residues: Ferredoxin--NADP reductase 2 (332 aa).

FAD is bound by residues Glu37, Gln45, Tyr50, Val90, Phe124, Asp285, and Thr326.

It belongs to the ferredoxin--NADP reductase type 2 family. In terms of assembly, homodimer. FAD serves as cofactor.

The enzyme catalyses 2 reduced [2Fe-2S]-[ferredoxin] + NADP(+) + H(+) = 2 oxidized [2Fe-2S]-[ferredoxin] + NADPH. This chain is Ferredoxin--NADP reductase 2, found in Bacillus pumilus (strain SAFR-032).